Here is a 240-residue protein sequence, read N- to C-terminus: Proteasome subunit beta type-1 (240 aa).

Met1 is modified (N-acetylmethionine). The propeptide occupies 1–27 (MLSTAAYRDVERELGMGPHGSAGPVQL). O-linked (GlcNAc) serine glycosylation is present at Ser57. Phosphoserine is present on residues Ser61 and Ser67. Tyr149 carries the phosphotyrosine modification. At Ser161 the chain carries Phosphoserine. Residue Lys203 is modified to N6-acetyllysine. Ser208 carries an O-linked (GlcNAc) serine glycan.

The protein belongs to the peptidase T1B family. In terms of assembly, the 26S proteasome consists of a 20S proteasome core and two 19S regulatory subunits. The 20S proteasome core is a barrel-shaped complex made of 28 subunits that are arranged in four stacked rings. The two outer rings are each formed by seven alpha subunits, and the two inner rings are formed by seven beta subunits. The proteolytic activity is exerted by three beta-subunits PSMB5, PSMB6 and PSMB7. Interacts with SERPINB2. Interacts with RFPL4A. Detected in liver (at protein level).

It localises to the cytoplasm. The protein resides in the nucleus. Functionally, non-catalytic component of the 20S core proteasome complex involved in the proteolytic degradation of most intracellular proteins. This complex plays numerous essential roles within the cell by associating with different regulatory particles. Associated with two 19S regulatory particles, forms the 26S proteasome and thus participates in the ATP-dependent degradation of ubiquitinated proteins. The 26S proteasome plays a key role in the maintenance of protein homeostasis by removing misfolded or damaged proteins that could impair cellular functions, and by removing proteins whose functions are no longer required. Associated with the PA200 or PA28, the 20S proteasome mediates ubiquitin-independent protein degradation. This type of proteolysis is required in several pathways including spermatogenesis (20S-PA200 complex) or generation of a subset of MHC class I-presented antigenic peptides (20S-PA28 complex). This chain is Proteasome subunit beta type-1 (Psmb1), found in Mus musculus (Mouse).